The following is a 592-amino-acid chain: Transmembrane 9 superfamily member 3 (592 aa).

The N-terminal stretch at 1–19 (MRLPTTLLLFIGALIFSGA) is a signal peptide. Residues 20-229 (GTVRSDASDH…SLPHHLEIHW (210 aa)) are Lumenal-facing. A helical transmembrane segment spans residues 230–250 (FSIINSCVTVLLLTGFLATIL). Topologically, residues 251–302 (MRVLKNDFMKYAQDEEAADDQEETGWKYIHGDVFRFPKNKSLFAASLGSGTQ) are cytoplasmic. A helical membrane pass occupies residues 303–323 (LFTLTIFIFMLSLVGVFYPYN). Topologically, residues 324 to 325 (RG) are lumenal. A helical membrane pass occupies residues 326–346 (ALFTALVVIYALTSGIAGYTA). The Cytoplasmic portion of the chain corresponds to 347–365 (SSFYCQLEGKNWVRNLLLT). The chain crosses the membrane as a helical span at residues 366–386 (GGLFCGPLFLTFCFLNTVAIA). The Lumenal segment spans residues 387–397 (YSATAALPFGT). A helical membrane pass occupies residues 398-418 (IIVIVLIWTLVTSPLLVLGGI). Topologically, residues 419 to 452 (AGKNSKAEFQAPVRTTKYPREIPPLPWYRSAVPQ) are cytoplasmic. Residues 453-473 (MAMAGFLPFSAIYIELYYIFA) traverse the membrane as a helical segment. Residues 474–485 (SVWGHRIYTIYS) are Lumenal-facing. A helical membrane pass occupies residues 486 to 506 (ILFIVFIILLIVTAFITVALT). Over 507-521 (YFQLAAEDHEWWWRS) the chain is Cytoplasmic. A helical membrane pass occupies residues 522-542 (FLCGGSTGLFIYAYCLYYYYA). The Lumenal segment spans residues 543–553 (RSDMSGFMQTS). Residues 554–574 (FFFGYMACICYGFFLMLGTVG) traverse the membrane as a helical segment. Over 575-592 (FRAALLFVRHIYRSIKCE) the chain is Cytoplasmic. Positions 581-586 (FVRHIY) match the Endoplasmic reticulum export signal motif. Residues 590-592 (KCE) carry the Golgi retention signal motif.

It belongs to the nonaspanin (TM9SF) (TC 9.A.2) family.

It localises to the endosome membrane. It is found in the golgi apparatus membrane. The sequence is that of Transmembrane 9 superfamily member 3 from Arabidopsis thaliana (Mouse-ear cress).